Reading from the N-terminus, the 865-residue chain is DNA mismatch repair protein MutS (865 aa).

ATP is bound at residue 609-616; the sequence is GPNMAGKS.

The protein belongs to the DNA mismatch repair MutS family.

This protein is involved in the repair of mismatches in DNA. It is possible that it carries out the mismatch recognition step. This protein has a weak ATPase activity. The chain is DNA mismatch repair protein MutS from Leuconostoc citreum (strain KM20).